The primary structure comprises 512 residues: Neuronal acetylcholine receptor subunit alpha-3 (512 aa).

Positions 1 to 23 are cleaved as a signal peptide; the sequence is MNSASRITLFFLLTVLITQECLS. At 24 to 242 the chain is on the extracellular side; it reads SKGEDRLFRR…PLFYTINLII (219 aa). Residues Asn-47 and Asn-164 are each glycosylated (N-linked (GlcNAc...) asparagine). 2 cysteine pairs are disulfide-bonded: Cys-151-Cys-165 and Cys-215-Cys-216. A helical transmembrane segment spans residues 243-258; the sequence is PCLLISFLTILVFYLP. Topologically, residues 259–260 are cytoplasmic; it reads SD. The helical transmembrane segment at 261-277 threads the bilayer; sequence CGEKVTLCISVLLSLTV. Glu-263 contacts Na(+). Residues 278-299 are Extracellular-facing; that stretch reads FLLVITETIPSTSLVIPLIGEY. The helical transmembrane segment at 300 to 318 threads the bilayer; sequence LLFTMIFVTLSIVITVFVL. Over 319–482 the chain is Cytoplasmic; that stretch reads NVHYRTPMTH…EDDWKYVAMV (164 aa). Positions 356 to 389 are disordered; it reads ESSGKGGGEIAGSSGTGGGRGAEGKKMKSSASQQ. A compositionally biased stretch (gly residues) spans 359–376; that stretch reads GKGGGEIAGSSGTGGGRG. The helical transmembrane segment at 483–501 threads the bilayer; sequence IDRIFLWVFVLVCVLGTLG. At 502–512 the chain is on the extracellular side; that stretch reads LFLQPLIGFFS.

The protein belongs to the ligand-gated ion channel (TC 1.A.9) family. Acetylcholine receptor (TC 1.A.9.1) subfamily. Alpha-3/CHRNA3 sub-subfamily. As to quaternary structure, neuronal AChR is composed of two different types of subunits: alpha and beta. CHRNA3/Alpha-3 subunit can be combined to CHRNB2/beta-2 or CHRNB4/beta-4 to give rise to functional receptors. As to expression, expressed in retina and brain.

It localises to the synaptic cell membrane. The protein resides in the cell membrane. The protein localises to the endoplasmic reticulum. It is found in the golgi apparatus. It carries out the reaction K(+)(in) = K(+)(out). It catalyses the reaction Na(+)(in) = Na(+)(out). The catalysed reaction is Ca(2+)(in) = Ca(2+)(out). Activated by a myriad of ligands such as acetylcholine, cytisine, nicotine, choline and epibatidine. The heteropentamer CHRNA3:CHRNB2 activity is blocked by alpha-conotoxins ImI, ImII, PnIA, GID and MII. The heteropentamer CHRNA3:CHRNB4 activity is blocked by the alpha-conotoxin ImI and AuIB. Component of neuronal acetylcholine receptors (nAChRs) that function as pentameric, ligand-gated cation channels with high calcium permeability among other activities. nAChRs are excitatory neurotrasnmitter receptors formed by a collection of nAChR subunits known to mediate synaptic transmission in the nervous system and the neuromuscular junction. Each nAchR subunit confers differential attributes to channel properties, including activation, deactivation and desensitization kinetics, pH sensitivity, cation permeability, and binding to allosteric modulators. CHRNA3 forms heteropentameric neuronal acetylcholine receptors with CHRNB2 and CHRNB4. CHRNA3:CHRNB4 being predominant in neurons of the autonomic ganglia, it is known as ganglionic nicotinic receptor. CHRNA3:CHRNB4 also plays an important role in the habenulo-interpeduncular tract, modulating the mesolimbic dopamine system and affecting reward circuits and addiction. Hypothalamic CHRNA3:CHRNB4 nAChR activation by nicotine leads to activation of POMC neurons and a decrease in food intake. Also expressed in the urothelium where it modulates reflex bladder activity by increasing intracellular calcium through extracellular influx and basal ATP release. The protein is Neuronal acetylcholine receptor subunit alpha-3 (chrna3) of Carassius auratus (Goldfish).